The chain runs to 583 residues: MAAAAVSESWPELELAERERRRELLLTGPGLEERVRAAGGQLPPRLFTLPLLHYLEVSGCGSLRAPGPGLAQGLPQLHSLVLRRNALGPGLSPELGPLPALRVLDLSGNALEALPPGQGLGPAEPPGLPQLQSLNLSGNRLRELPADLARCAPRLQSLNLTGNCLDSFPAELFRPGALPLLSELAAADNCLRELSPDIAHLASLKTLDLSNNQLSEIPAELADCPKLKEINFRGNKLRDKRLEKMVSGCQTRSILEYLRVGGRGGGKGKGRAEGSEKEESRRKRRERKQRREGGDGEEQDVGDAGRLLLRVLHVSENPVPLTVRVSPEVRDVRPYIVGAVVRGMDLQPGNALKRFLTSQTKLHEDLCEKRTAATLATHELRAVKGPLLYCARPPQDLKIVPLGRKEAKAKELVRQLQLEAEEQRKQKKRQSVSGLHRYLHLLDGNENYPCLVDADGDVISFPPITNSEKTKVKKTTSDLFLEVTSATSLQICKDVMDALILKMAEMKKYTLENKEEGSLSDTEADAVSGQLPDPTTNPSAGKDGPSLLVVEQVRVVDLEGSLKVVYPSKADLATAPPHVTVVR.

N-acetylalanine is present on A2. LRR repeat units follow at residues 76–95, 100–121, 130–152, 154–175, 180–202, 203–225, and 226–246; these read QLHS…SPEL, ALRV…QGLG, QLQS…ARCA, RLQS…LFRP, LLSE…AHLA, SLKT…ADCP, and KLKE…EKMV. The segment at 260-300 is disordered; it reads VGGRGGGKGKGRAEGSEKEESRRKRRERKQRREGGDGEEQD. The segment covering 270–281 has biased composition (basic and acidic residues); sequence GRAEGSEKEESR. 2 positions are modified to phosphoserine: S315 and S431. Residues 402–437 are a coiled coil; it reads LGRKEAKAKELVRQLQLEAEEQRKQKKRQSVSGLHR. The residue at position 509 (Y509) is a Phosphotyrosine. Residues 513 to 544 form a disordered region; that stretch reads NKEEGSLSDTEADAVSGQLPDPTTNPSAGKDG. Phosphoserine is present on residues S518 and S520.

This is Leucine-rich repeat-containing protein 47 (LRRC47) from Homo sapiens (Human).